The sequence spans 230 residues: Large ribosomal subunit protein uL1 (230 aa).

The protein belongs to the universal ribosomal protein uL1 family. In terms of assembly, part of the 50S ribosomal subunit.

Functionally, binds directly to 23S rRNA. The L1 stalk is quite mobile in the ribosome, and is involved in E site tRNA release. In terms of biological role, protein L1 is also a translational repressor protein, it controls the translation of the L11 operon by binding to its mRNA. This Leptospira borgpetersenii serovar Hardjo-bovis (strain L550) protein is Large ribosomal subunit protein uL1.